We begin with the raw amino-acid sequence, 91 residues long: Putative defensin-like protein 145 (91 aa).

The signal sequence occupies residues 1-26 (MNKNIIFSFTVLTLFVIFVQVTGVIG). 2 N-linked (GlcNAc...) asparagine glycosylation sites follow: Asn35 and Asn68. Cystine bridges form between Cys39-Cys84, Cys52-Cys74, Cys57-Cys78, and Cys61-Cys80.

It belongs to the DEFL family.

It localises to the secreted. This is Putative defensin-like protein 145 (LCR2) from Arabidopsis thaliana (Mouse-ear cress).